Reading from the N-terminus, the 250-residue chain is MVKIEIGSVGDSFSVASLKAYLSEFIATLLFVFAGVGSALAFAKLTSDAALDPAGLVAVAVAHAFALFVGVSIAANISGGHLNPAVTLGLAVGGNITVITGFFYWIAQCLGSIVACLLLVFVTNGESVPTHGVAAGLGAIEGVVMEIVVTFALVYTVYATAADPKKGSLGTIAPIAIGFIVGANILAAGPFSGGSMNPARSFGPAVVSGDFSQIWIYWVGPLVGGALAGLIYGDVFIGSYAPAPTTESYP.

Met1 carries the N-acetylmethionine modification. The Cytoplasmic portion of the chain corresponds to Met1–Glu24. Lys3 bears the N6,N6-dimethyllysine mark. The chain crosses the membrane as a helical span at residues Phe25–Leu45. Residues Thr46–Pro53 lie on the Vacuolar side of the membrane. A helical transmembrane segment spans residues Ala54 to Ala74. Over Ala75 to Gly101 the chain is Cytoplasmic. Residues Asn83–Ala85 carry the NPA 1 motif. The helical transmembrane segment at Phe102–Val122 threads the bilayer. Residues Thr123–Val133 are Vacuolar-facing. The helical transmembrane segment at Ala134–Val154 threads the bilayer. Residues Tyr155–Ser168 are Cytoplasmic-facing. The helical transmembrane segment at Leu169–Gly189 threads the bilayer. Residues Pro190–Asp210 lie on the Vacuolar side of the membrane. The short motif at Asn197 to Ala199 is the NPA 2 element. A helical transmembrane segment spans residues Phe211–Ile231. Topologically, residues Tyr232–Pro250 are cytoplasmic. A Phosphoserine modification is found at Ser248.

Belongs to the MIP/aquaporin (TC 1.A.8) family. TIP (TC 1.A.8.10) subfamily. As to quaternary structure, interacts with cucumber mosaic virus (CMV) Protein 1a. In terms of tissue distribution, expressed above groung and in roots.

It localises to the vacuole membrane. Aquaporins facilitate the transport of water and small neutral solutes across cell membranes. This Arabidopsis thaliana (Mouse-ear cress) protein is Probable aquaporin TIP2-2 (TIP2-2).